The following is a 593-amino-acid chain: Tyrosine-protein phosphatase non-receptor type 11 (593 aa).

2 consecutive SH2 domains span residues 6-102 and 112-216; these read WFHP…KYPL and WFHG…KQPL. Residues 247-521 form the Tyrosine-protein phosphatase domain; the sequence is FWEEFETLQQ…RFIYMAVQHY (275 aa). Substrate contacts are provided by residues aspartate 425, 459–465, and glutamine 506; that span reads CSAGIGR. The Phosphocysteine intermediate role is filled by cysteine 459. Residues 548–557 show a composition bias toward polar residues; that stretch reads SLSDQTSGDQ. Positions 548–575 are disordered; that stretch reads SLSDQTSGDQSPLPPCTPTPTCPEMRED. Residues 559–568 show a composition bias toward pro residues; the sequence is PLPPCTPTPT.

This sequence belongs to the protein-tyrosine phosphatase family. Non-receptor class 2 subfamily. In terms of processing, phosphorylated by tyrosine-protein kinases. As to expression, expressed in embryonic fibroblast, hematopoietic, erythroid, myeloid and lymphoid cells.

It is found in the cytoplasm. The enzyme catalyses O-phospho-L-tyrosyl-[protein] + H2O = L-tyrosyl-[protein] + phosphate. This PTPase activity may directly link growth factor receptors and other signaling proteins through protein-tyrosine phosphorylation. The SH2 regions may interact with other cellular components to modulate its own phosphatase activity against interacting substrates. May play a positive role during the stages of erythroid cell proliferation. The polypeptide is Tyrosine-protein phosphatase non-receptor type 11 (PTPN11) (Gallus gallus (Chicken)).